A 305-amino-acid chain; its full sequence is Serine/threonine-protein kinase 16 (305 aa).

Gly-2 carries the N-myristoyl glycine lipid modification. 2 S-palmitoyl cysteine lipidation sites follow: Cys-6 and Cys-8. Residues Tyr-20 to Leu-293 enclose the Protein kinase domain. ATP is bound by residues Leu-26–Val-34 and Lys-49. The Proton acceptor role is filled by Asp-148. An activation loop region spans residues Asp-166–Glu-202. Thr-185 is modified (phosphothreonine; by autocatalysis). Ser-197 bears the Phosphoserine; by autocatalysis mark. The residue at position 198 (Tyr-198) is a Phosphotyrosine; by autocatalysis.

The protein belongs to the protein kinase superfamily. Ser/Thr protein kinase family. As to quaternary structure, monomer. Interacts with DRG1 (via its N-terminal); the interaction phosphorylates DRG1. In terms of processing, mainly autophosphorylated on serine/threonine residues. Also autophosphorylated on Tyr-198. It is uncertain whether palmitoylation is on Cys-6 and/or Cys-8. As to expression, ubiquitously expressed at very low levels.

Its subcellular location is the cytoplasm. The protein localises to the perinuclear region. It is found in the membrane. The catalysed reaction is L-seryl-[protein] + ATP = O-phospho-L-seryl-[protein] + ADP + H(+). It catalyses the reaction L-threonyl-[protein] + ATP = O-phospho-L-threonyl-[protein] + ADP + H(+). It carries out the reaction L-tyrosyl-[protein] + ATP = O-phospho-L-tyrosyl-[protein] + ADP + H(+). In terms of biological role, membrane-associated protein kinase that phosphorylates on serine and threonine residues. In vitro substrates include DRG1, ENO1 and EIF4EBP1. Also autophosphorylates. May be involved in secretory vesicle trafficking or intracellular signaling. May have a role in regulating stromal-epithelial interactions that occur during ductal morphogenesis in the mammary gland. May be involved in TGF-beta signaling. Able to autophosphorylate on Tyr residue; it is however unclear whether it has tyrosine-protein kinase toward other proteins. This chain is Serine/threonine-protein kinase 16 (STK16), found in Homo sapiens (Human).